The chain runs to 137 residues: Ribosomal RNA large subunit methyltransferase H (137 aa).

Residues Leu-56, Gly-85, and 104–109 each bind S-adenosyl-L-methionine; that span reads LSPLTL.

Belongs to the RNA methyltransferase RlmH family. Homodimer.

It is found in the cytoplasm. The enzyme catalyses pseudouridine(1915) in 23S rRNA + S-adenosyl-L-methionine = N(3)-methylpseudouridine(1915) in 23S rRNA + S-adenosyl-L-homocysteine + H(+). Its function is as follows. Specifically methylates the pseudouridine at position 1915 (m3Psi1915) in 23S rRNA. This chain is Ribosomal RNA large subunit methyltransferase H, found in Thermus thermophilus (strain ATCC BAA-163 / DSM 7039 / HB27).